The primary structure comprises 534 residues: MGQRLNLVFWIFVSILAFLNFGMASKIGICYGRNADNLPSPNRVSELIQHLNIKFVRIYDANIDVLKAFANTGIELMIGVPNADLLAFAQFQSNVDTWLSNNILPYYPSTKITSISVGLEVTEAPDNATGLVLPAMRNIHTALKKSGLDKKIKISSSHSLAILSRSFPPSSASFSKKHSAFLKPMLEFLVENESPFMIDLYPYYAYRDSTEKVPLEYALFESSSQVVDPATGLLYSNMFDAQLDAIYFALTAMSFKTVKVMVTESGWPSKGSPKETAATPENALAYNTNLIRHVIGDPGTPAKPGEEIDVYLFSLFNENRKPGIESERNWGMFYANGTNVYALDFTGENTTPVSPTNSTTGTSPSPSSSPIINGNSTVTIGGGGGGGTKKWCIASSQASVTELQTALDWACGPGNVDCSAVQPDQPCFEPDTVLSHASYAFNTYYQQSGASSIDCSFNGASVEVDKDPSYGNCLYMIAPATDGFNRTMAGNITGNITAIDSPLASPSSTNEAFRQMVVAVSVLLPCFVVCSSIW.

The first 24 residues, 1 to 24 (MGQRLNLVFWIFVSILAFLNFGMA), serve as a signal peptide directing secretion. The active-site Proton donor is Glu120. Asn127 carries an N-linked (GlcNAc...) asparagine glycan. The active-site Nucleophile is Glu264. Asn336, Asn357, and Asn375 each carry an N-linked (GlcNAc...) asparagine glycan. Residues 348-379 (ENTTPVSPTNSTTGTSPSPSSSPIINGNSTVT) form a disordered region. A compositionally biased stretch (low complexity) spans 349–377 (NTTPVSPTNSTTGTSPSPSSSPIINGNST). Cysteines 392 and 455 form a disulfide. N-linked (GlcNAc...) asparagine glycosylation is found at Asn485, Asn491, and Asn495. Ser507 carries GPI-anchor amidated serine lipidation. The propeptide at 508 to 534 (STNEAFRQMVVAVSVLLPCFVVCSSIW) is removed in mature form.

The protein belongs to the glycosyl hydrolase 17 family. In terms of processing, contains two additional disulfide bonds.

The protein localises to the secreted. Its subcellular location is the cell wall. It localises to the cell membrane. It carries out the reaction Hydrolysis of (1-&gt;3)-beta-D-glucosidic linkages in (1-&gt;3)-beta-D-glucans.. This Arabidopsis thaliana (Mouse-ear cress) protein is Glucan endo-1,3-beta-glucosidase 12.